A 70-amino-acid polypeptide reads, in one-letter code: Cold shock-like protein CspJ (70 aa).

The CSD domain occupies 7-67; it reads GLVKWFNPEK…GPKGPSAVNV (61 aa).

Its subcellular location is the cytoplasm. In Salmonella typhimurium (strain SL1344), this protein is Cold shock-like protein CspJ (cspJ).